A 504-amino-acid polypeptide reads, in one-letter code: ATP synthase subunit beta (504 aa).

The segment at 1–23 (MAKAATPKETAAAKKPAAPKKAA) is disordered. Position 182–189 (182–189 (GGAGVGKT)) interacts with ATP.

It belongs to the ATPase alpha/beta chains family. In terms of assembly, F-type ATPases have 2 components, CF(1) - the catalytic core - and CF(0) - the membrane proton channel. CF(1) has five subunits: alpha(3), beta(3), gamma(1), delta(1), epsilon(1). CF(0) has three main subunits: a(1), b(2) and c(9-12). The alpha and beta chains form an alternating ring which encloses part of the gamma chain. CF(1) is attached to CF(0) by a central stalk formed by the gamma and epsilon chains, while a peripheral stalk is formed by the delta and b chains.

The protein resides in the cell inner membrane. It catalyses the reaction ATP + H2O + 4 H(+)(in) = ADP + phosphate + 5 H(+)(out). Its function is as follows. Produces ATP from ADP in the presence of a proton gradient across the membrane. The catalytic sites are hosted primarily by the beta subunits. This is ATP synthase subunit beta from Rhizobium meliloti (strain 1021) (Ensifer meliloti).